The sequence spans 299 residues: N-carbamoylputrescine amidase (299 aa).

Residues 10–268 enclose the CN hydrolase domain; sequence VVVSSLQFAC…EAVLVAQFDL (259 aa). The Proton acceptor role is filled by glutamate 49. The active-site Proton donor is lysine 122. The active-site Nucleophile is the cysteine 159.

The protein belongs to the carbon-nitrogen hydrolase superfamily. In terms of assembly, homooctamer (isoform 2). As to expression, expressed in roots, stems, leaves and flowers.

The enzyme catalyses N-carbamoylputrescine + H2O + 2 H(+) = putrescine + NH4(+) + CO2. The protein operates within amine and polyamine biosynthesis; putrescine biosynthesis via agmatine pathway; putrescine from N-carbamoylputrescine (amidase route): step 1/1. Functionally, involved in polyamine biosynthesis. Catalyzes the hydrolysis of N-carbamoylputrescine to produce putrescine and ammonia. The sequence is that of N-carbamoylputrescine amidase from Arabidopsis thaliana (Mouse-ear cress).